The sequence spans 1279 residues: Amylopullulanase (1279 aa).

Positions 1–35 (MYKKLFTKKFISFVMSLLLVLTAAFSSMPFHNVYA) are cleaved as a signal peptide. The Ca(2+) site is built by Asp-248, Asn-250, Asp-288, Asp-343, Asn-401, Asp-403, Asn-406, Asp-407, Gly-452, and Asp-454. Substrate is bound by residues His-527 and Arg-627. Catalysis depends on Asp-629, which acts as the Nucleophile. The Proton donor role is filled by Glu-658. Substrate-binding positions include 734-735 (HD), Asp-794, and Arg-798. Fibronectin type-III domains lie at 930–1022 (APQV…AYPI) and 1158–1252 (KPTA…VVPI).

Belongs to the glycosyl hydrolase 13 family. Ca(2+) is required as a cofactor.

It carries out the reaction Endohydrolysis of (1-&gt;4)-alpha-D-glucosidic linkages in polysaccharides containing three or more (1-&gt;4)-alpha-linked D-glucose units.. The catalysed reaction is Hydrolysis of (1-&gt;6)-alpha-D-glucosidic linkages in pullulan, amylopectin and glycogen, and in the alpha- and beta-limit dextrins of amylopectin and glycogen.. The polypeptide is Amylopullulanase (apu) (Thermoanaerobacterium saccharolyticum).